Reading from the N-terminus, the 291-residue chain is MTQNRAELNRNLAQMLKGGVIMDVTTPEQAKIAQDAGACAVMALERIPADIRAAGGVSRMSDPAMIKGIQEAVSIPVMAKVRIGHIAEARILQAIDIDYIDESEVLSPADDVYHIDKNQFDVPFVCGAKNLGEALRRIAEGAAMIRTKGEPGTGDVIQAVRHMRTMNKQIRELVALRDDEVYEAAKQLAVPYDLAKYVHDNGRLPVVNFAAGGVATPADAALMMELGAEGVFVGSGIFKSGDPAKRAAAIVKATANWQDADLLAKLSENLGEAMVGINEDEIQTIMAARGE.

D23 serves as a coordination point for D-ribose 5-phosphate. K80 functions as the Schiff-base intermediate with D-ribose 5-phosphate in the catalytic mechanism. G152 serves as a coordination point for D-ribose 5-phosphate. R164 lines the D-glyceraldehyde 3-phosphate pocket. D-ribose 5-phosphate contacts are provided by residues G213 and 234 to 235; that span reads GS.

The protein belongs to the PdxS/SNZ family. In terms of assembly, in the presence of PdxT, forms a dodecamer of heterodimers.

It catalyses the reaction aldehydo-D-ribose 5-phosphate + D-glyceraldehyde 3-phosphate + L-glutamine = pyridoxal 5'-phosphate + L-glutamate + phosphate + 3 H2O + H(+). It functions in the pathway cofactor biosynthesis; pyridoxal 5'-phosphate biosynthesis. In terms of biological role, catalyzes the formation of pyridoxal 5'-phosphate from ribose 5-phosphate (RBP), glyceraldehyde 3-phosphate (G3P) and ammonia. The ammonia is provided by the PdxT subunit. Can also use ribulose 5-phosphate and dihydroxyacetone phosphate as substrates, resulting from enzyme-catalyzed isomerization of RBP and G3P, respectively. The chain is Pyridoxal 5'-phosphate synthase subunit PdxS from Bifidobacterium longum (strain DJO10A).